The chain runs to 55 residues: Large ribosomal subunit protein bL33 (55 aa).

Belongs to the bacterial ribosomal protein bL33 family.

This Parvibaculum lavamentivorans (strain DS-1 / DSM 13023 / NCIMB 13966) protein is Large ribosomal subunit protein bL33.